The following is a 91-amino-acid chain: Putative regulatory protein Cyan7425_4125 (91 aa).

It belongs to the RemA family.

The sequence is that of Putative regulatory protein Cyan7425_4125 from Cyanothece sp. (strain PCC 7425 / ATCC 29141).